The primary structure comprises 209 residues: Glutathione S-transferase D1 (209 aa).

The region spanning 1 to 81 (MVDFYYLPGS…YLVEKYGKTD (81 aa)) is the GST N-terminal domain. Residues serine 10, 51–53 (HTI), and 65–67 (ESR) each bind glutathione. In terms of domain architecture, GST C-terminal spans 87-208 (CPKKRAVINQ…AGCLEFKKYF (122 aa)).

The protein belongs to the GST superfamily. Delta family. In terms of assembly, homodimer.

The catalysed reaction is RX + glutathione = an S-substituted glutathione + a halide anion + H(+). It carries out the reaction 1,1,1-trichloro-2,2-bis(4-chlorophenyl)ethane = 1,1-dichloro-2,2-bis(4-chlorophenyl)ethylene + chloride + H(+). In terms of biological role, conjugation of reduced glutathione to a wide number of exogenous and endogenous hydrophobic electrophiles. Has DDT dehydrochlorinase activity. May be involved in detoxification. This Drosophila melanogaster (Fruit fly) protein is Glutathione S-transferase D1.